The following is a 37-amino-acid chain: Omega-sparatoxin-Hv1a (37 aa).

3 cysteine pairs are disulfide-bonded: cysteine 4/cysteine 18, cysteine 11/cysteine 23, and cysteine 17/cysteine 33.

As to expression, expressed by the venom gland.

It localises to the secreted. Functionally, blocks calcium channels (Cav). The chain is Omega-sparatoxin-Hv1a from Heteropoda venatoria (Brown huntsman spider).